The primary structure comprises 380 residues: Crotonobetainyl-CoA reductase (380 aa).

The protein belongs to the acyl-CoA dehydrogenase family. Homotetramer. FAD is required as a cofactor.

It is found in the cytoplasm. The catalysed reaction is 4-(trimethylamino)butanoyl-CoA + oxidized [electron-transfer flavoprotein] + H(+) = crotonobetainyl-CoA + reduced [electron-transfer flavoprotein]. It functions in the pathway amine and polyamine metabolism; carnitine metabolism. In terms of biological role, catalyzes the reduction of crotonobetainyl-CoA to gamma-butyrobetainyl-CoA. In Citrobacter koseri (strain ATCC BAA-895 / CDC 4225-83 / SGSC4696), this protein is Crotonobetainyl-CoA reductase.